The primary structure comprises 283 residues: Nudix hydrolase 6 (283 aa).

Positions 101 to 233 (SHRIGVGAFV…KKELFRFMAN (133 aa)) constitute a Nudix hydrolase domain. The Nudix box motif lies at 139–160 (GVVKEGENIWEGALREVEEETG). Residues Glu154, Glu158, and Glu204 each coordinate a divalent metal cation.

This sequence belongs to the Nudix hydrolase family. Requires Mg(2+) as cofactor. Mn(2+) serves as cofactor. As to expression, expressed in stems and leaves. Weakly or not expressed in roots.

It carries out the reaction ADP-D-ribose + H2O = D-ribose 5-phosphate + AMP + 2 H(+). It catalyses the reaction NAD(+) + H2O = beta-nicotinamide D-ribonucleotide + AMP + 2 H(+). The catalysed reaction is NADH + H2O = reduced beta-nicotinamide D-ribonucleotide + AMP + 2 H(+). Functionally, probably mediates the hydrolysis of some nucleoside diphosphate derivatives. In vitro, it can use both NADH and ADP-ribose as substrates; however the relevance of such substrates in vivo is unclear. This Arabidopsis thaliana (Mouse-ear cress) protein is Nudix hydrolase 6.